Here is a 196-residue protein sequence, read N- to C-terminus: Putative lipopolysaccharide biosynthesis O-acetyl transferase WbbJ (196 aa).

This sequence belongs to the transferase hexapeptide repeat family.

It functions in the pathway bacterial outer membrane biogenesis; lipopolysaccharide biosynthesis. Functionally, putative O-acetyltransferase that transfers an O-acetyl group to the O antigen. The sequence is that of Putative lipopolysaccharide biosynthesis O-acetyl transferase WbbJ (wbbJ) from Escherichia coli (strain K12).